A 136-amino-acid polypeptide reads, in one-letter code: Large ribosomal subunit protein uL16 (136 aa).

Belongs to the universal ribosomal protein uL16 family. As to quaternary structure, part of the 50S ribosomal subunit.

Functionally, binds 23S rRNA and is also seen to make contacts with the A and possibly P site tRNAs. This is Large ribosomal subunit protein uL16 from Aliivibrio salmonicida (strain LFI1238) (Vibrio salmonicida (strain LFI1238)).